The primary structure comprises 360 residues: 3-dehydroquinate synthase (360 aa).

NAD(+) is bound by residues 71 to 76 (DGEAHK), 105 to 109 (GVVGD), 129 to 130 (TT), K142, and K151. E184, H247, and H264 together coordinate Zn(2+).

This sequence belongs to the sugar phosphate cyclases superfamily. Dehydroquinate synthase family. The cofactor is Co(2+). Requires Zn(2+) as cofactor. NAD(+) is required as a cofactor.

The protein resides in the cytoplasm. It carries out the reaction 7-phospho-2-dehydro-3-deoxy-D-arabino-heptonate = 3-dehydroquinate + phosphate. It functions in the pathway metabolic intermediate biosynthesis; chorismate biosynthesis; chorismate from D-erythrose 4-phosphate and phosphoenolpyruvate: step 2/7. Functionally, catalyzes the conversion of 3-deoxy-D-arabino-heptulosonate 7-phosphate (DAHP) to dehydroquinate (DHQ). This Azoarcus sp. (strain BH72) protein is 3-dehydroquinate synthase.